The primary structure comprises 455 residues: tRNA modification GTPase MnmE (455 aa).

3 residues coordinate (6S)-5-formyl-5,6,7,8-tetrahydrofolate: arginine 24, glutamate 81, and lysine 120. The TrmE-type G domain occupies 216–378; it reads GMTVVIAGRP…LREHLKACMG (163 aa). Asparagine 226 contributes to the K(+) binding site. GTP is bound by residues 226–231, 245–251, 270–273, and 335–338; these read NAGKSS, TDIAGTT, DTAG, and NKAD. Residue serine 230 coordinates Mg(2+). K(+) is bound by residues threonine 245, isoleucine 247, and threonine 250. Threonine 251 contributes to the Mg(2+) binding site. Lysine 455 is a (6S)-5-formyl-5,6,7,8-tetrahydrofolate binding site.

It belongs to the TRAFAC class TrmE-Era-EngA-EngB-Septin-like GTPase superfamily. TrmE GTPase family. In terms of assembly, homodimer. Heterotetramer of two MnmE and two MnmG subunits. It depends on K(+) as a cofactor.

Its subcellular location is the cytoplasm. In terms of biological role, exhibits a very high intrinsic GTPase hydrolysis rate. Involved in the addition of a carboxymethylaminomethyl (cmnm) group at the wobble position (U34) of certain tRNAs, forming tRNA-cmnm(5)s(2)U34. This chain is tRNA modification GTPase MnmE, found in Ectopseudomonas mendocina (strain ymp) (Pseudomonas mendocina).